We begin with the raw amino-acid sequence, 101 residues long: Small ribosomal subunit protein uS14A (101 aa).

A disordered region spans residues 31–74 (IRKPSTPEADRAAAQAALQRLPRDASPVRLRNRDAADGRPRGHL). Residues 61–70 (RNRDAADGRP) show a composition bias toward basic and acidic residues.

This sequence belongs to the universal ribosomal protein uS14 family. In terms of assembly, part of the 30S ribosomal subunit. Contacts proteins S3 and S10.

Binds 16S rRNA, required for the assembly of 30S particles and may also be responsible for determining the conformation of the 16S rRNA at the A site. This chain is Small ribosomal subunit protein uS14A, found in Nocardia farcinica (strain IFM 10152).